We begin with the raw amino-acid sequence, 817 residues long: Actin filament-associated protein 1-like 2 (817 aa).

Tyr-56 is subject to Phosphotyrosine. The segment at 63 to 164 is disordered; sequence HKQQNAESQD…KGKSAPHQWP (102 aa). Positions 123–139 are enriched in acidic residues; sequence YYEEAEPYDTSLNEDGE. 2 PH domains span residues 175–271 and 353–447; these read DARI…EVSG and SLET…SESG. The residue at position 408 (Ser-408) is a Phosphoserine. At Tyr-413 the chain carries Phosphotyrosine. The residue at position 484 (Ser-484) is a Phosphoserine. Low complexity predominate over residues 512 to 528; it reads TTAGEAPEEATPATDAP. 2 disordered regions span residues 512–657 and 754–786; these read TTAG…KLGK and GTTV…VNSA. Positions 652–748 form a coiled coil; the sequence is EIKLGKNRTE…VKDSLRKAEA (97 aa). The span at 754-763 shows a compositional bias: polar residues; that stretch reads GTTVDTTHLE. The segment covering 767-782 has biased composition (low complexity); the sequence is PRPKAATPTPAPDCTP.

In terms of assembly, interacts with SRC. Interacts with LCK when tyrosine phosphorylated. Tyrosine phosphorylated (by SRC).

The protein resides in the cytoplasm. In terms of biological role, may play a role in a signaling cascade by enhancing the kinase activity of SRC. Contributes to SRC-regulated transcription activation. This chain is Actin filament-associated protein 1-like 2 (AFAP1L2), found in Bos taurus (Bovine).